The chain runs to 380 residues: Pectin lyase (380 aa).

An N-terminal signal peptide occupies residues 1–20 (MRSASILSAALAAFAPLASA). An N-linked (GlcNAc...) asparagine glycan is attached at N130.

Belongs to the polysaccharide lyase 1 family.

The protein resides in the secreted. The enzyme catalyses Eliminative cleavage of (1-&gt;4)-alpha-D-galacturonan methyl ester to give oligosaccharides with 4-deoxy-6-O-methyl-alpha-D-galact-4-enuronosyl groups at their non-reducing ends.. This Colletotrichum gloeosporioides (Anthracnose fungus) protein is Pectin lyase (PNLA).